Here is a 1000-residue protein sequence, read N- to C-terminus: MPVIPPEKLVSLQKNQENIRNFTLLAHVDHGKTTLADSLLASNGIISSKLAGTVRFLDFREDEITRGITMKSSAISLFFKVISQNDEKRVEKDYLINLIDSPGHVDFSSEVSSASRLCDGAFVLVDAVEGVCSQTITVLRQAWIDRIKVILVINKMDRLITELKLSPIEAHYHLLRLVEQVNAVIGTFYTGELMQLADNDEVISDEGIYFAPEQGNVVFASAYDGWAFCLDQFSEFYEKKLGLKQKALTKCLWGDYYLDPKTKRVLQPKHLQGRRLKPMFVQFVLENLWAVYESAVSNRNLENIEKIIKALNIKVLPRDIKSKDPRNLLLAIFQQWLPLSTAILLTAIREIPSPINAQANRARKVLSSTPHYEMIDPDITLAMESCDASKEQPVLVYISKMVAFSERDLPNHRRKQLSAEEMKLIRSKLSESIESGINTISIEENVSSTNSDNLEGSTTDMDDDKDILIGFARIYSGTISVGQEVYVYGPKYDPVNPEKHITKVTVESLYLMMGQELVYLETVPAGNVFAIGGLAGTVLRTATLCSSPNGPNLVGVTQQMEPIVRVALEPVRPFEMNKLVTGLDMLNQADPCVQIAVEENGEHVIMCAGEIHLERCLKDLRERFAKIEIQASQPLVPYRETTIATPDLLAKNKELSIGFVTATLPVGGVTIGITVTPLSGSVVDFLLKHSKTIENVSSNFSKKNRNVVVSESLTKSMEEVLTPEKFYERLSKLLEEENSDLGELKNHLDSIIAFGPKRVGPNILFDKTKKMRDFRRQSDETKLIPSDLSEYVVTAFQLITHQGPLCAEPVQGICVSIDQFDISDDSEDSKLLTINNPQIPGQVISVVKESIRHGFLGWSPRLMLAMYSCDVQATSEVLGRVYGVVSKRRGRVIDEEMKEGTPFFIVKALIPVVESFGFAVEILKRTSGAAYPQLIFHGFEMLDENPFWVPTTEEELEDLGELADRENIAKRYMLNVRKRKGLLVEQKIVEKAEKQRTLKH.

One can recognise a tr-type G domain in the interval 17-246; it reads ENIRNFTLLA…YEKKLGLKQK (230 aa). GTP contacts are provided by residues 26-33, 100-104, and 154-157; these read AHVDHGKT, DSPGH, and NKMD.

The protein belongs to the TRAFAC class translation factor GTPase superfamily. Classic translation factor GTPase family.

It localises to the cytoplasm. It catalyses the reaction GTP + H2O = GDP + phosphate + H(+). GTPase activity is stimulated in the presence of 60S subunits. In terms of biological role, GTPase involved in the biogenesis of the 60S ribosomal subunit and translational activation of ribosomes. Together with sdo1, may trigger the GTP-dependent release of tif6 from 60S pre-ribosomes in the cytoplasm, thereby activating ribosomes for translation competence by allowing 80S ribosome assembly and facilitating tif6 recycling to the nucleus, where it is required for 60S rRNA processing and nuclear export. Inhibits GTPase activity of ribosome-bound EF-2. The protein is Ribosome assembly protein 1 (ria1) of Schizosaccharomyces pombe (strain 972 / ATCC 24843) (Fission yeast).